The sequence spans 182 residues: Large ribosomal subunit protein uL22 (182 aa).

Positions 159 to 182 are disordered; it reads AAAKPKATAKKATGEKSKAKTKAN.

The protein belongs to the universal ribosomal protein uL22 family. Part of the 50S ribosomal subunit.

Functionally, this protein binds specifically to 23S rRNA; its binding is stimulated by other ribosomal proteins, e.g. L4, L17, and L20. It is important during the early stages of 50S assembly. It makes multiple contacts with different domains of the 23S rRNA in the assembled 50S subunit and ribosome. The globular domain of the protein is located near the polypeptide exit tunnel on the outside of the subunit, while an extended beta-hairpin is found that lines the wall of the exit tunnel in the center of the 70S ribosome. The polypeptide is Large ribosomal subunit protein uL22 (Cytophaga hutchinsonii (strain ATCC 33406 / DSM 1761 / CIP 103989 / NBRC 15051 / NCIMB 9469 / D465)).